A 163-amino-acid polypeptide reads, in one-letter code: Probable chemoreceptor glutamine deamidase CheD (163 aa).

The protein belongs to the CheD family.

It catalyses the reaction L-glutaminyl-[protein] + H2O = L-glutamyl-[protein] + NH4(+). Its function is as follows. Probably deamidates glutamine residues to glutamate on methyl-accepting chemotaxis receptors (MCPs), playing an important role in chemotaxis. The polypeptide is Probable chemoreceptor glutamine deamidase CheD (Borrelia turicatae (strain 91E135)).